A 338-amino-acid polypeptide reads, in one-letter code: Serine/threonine-protein kinase YabT (338 aa).

Residues 28 to 286 (YTLRKQLGKG…PIKASPQPAT (259 aa)) form the Protein kinase domain. Residues 34-42 (LGKGANGIV) and lysine 55 each bind ATP. Catalysis depends on aspartate 148, which acts as the Proton acceptor. The tract at residues 266–312 (DAGQKAAQRKQPIKASPQPATRQRQQKPRQGKITKTRYTPKQKPAKS) is disordered. A compositionally biased stretch (basic residues) spans 289-309 (RQQKPRQGKITKTRYTPKQKP).

Belongs to the protein kinase superfamily. Ser/Thr protein kinase family. In terms of processing, autophosphorylated.

It carries out the reaction L-seryl-[protein] + ATP = O-phospho-L-seryl-[protein] + ADP + H(+). The enzyme catalyses L-threonyl-[protein] + ATP = O-phospho-L-threonyl-[protein] + ADP + H(+). Plays a role in the cell's commitment to sporulation; phosphorylates DNA replication initiation-control protein YabA. Deletion of this kinase delays entry into sporulation but does not affect final spore yield. Overexpression decreases biofilm formation; phosphorylation of YabA probably prevents biofilm formation. The protein is Serine/threonine-protein kinase YabT (yabT) of Bacillus subtilis (strain 168).